Reading from the N-terminus, the 492-residue chain is MRDMGRSDIVISAVDALDIHIAMTSNACDKYPAKQHARRVAVKLGVSTGLVYLAGQPTVNWGDSDQPRPFRQRRYFYYLSGVDEADCYVTYDIRNDLLTLYVPDFDLHRAVWMGPTLTVEEARERYDVDQVRYYASLQGDVQRWVDKYNQSSPLYILHDTQRPRVSSNEVRFDDESLLPAMDATRGVKDEHEIRMIREANRISGLAHRRVLENIHRMSNEAEIEGLFLNTCISHRAKNQAYELIAGSGENAAVLHYVKNNEPLRGRQLVCLDAGAEWNCYASDVTRTFPLGTDWPSAEARHIYQLVEEMQEECIKRIQKGVRFIDLQVLAHVIAIEGLMRLGILRGGSVEEIRESGASTVFFPHGLGHHVGLEVHDVSAKDLRASDADRDYYNSVLTPSTSHGPCTLSAPALEEGMVVTVEPGIYFSRLALANARKLPYAKYIDFNEAEKYIPIGGVRIEDDILVTSSGYENLTTAPKGEAMLEIIRRGIDN.

Positions 272, 283, 421, and 460 each coordinate Mn(2+).

Belongs to the peptidase M24B family. It depends on Mn(2+) as a cofactor.

The enzyme catalyses Release of any N-terminal amino acid, including proline, that is linked to proline, even from a dipeptide or tripeptide.. In terms of biological role, catalyzes the removal of a penultimate prolyl residue from the N-termini of peptides. The polypeptide is Probable Xaa-Pro aminopeptidase ACLA_020440 (Aspergillus clavatus (strain ATCC 1007 / CBS 513.65 / DSM 816 / NCTC 3887 / NRRL 1 / QM 1276 / 107)).